A 408-amino-acid chain; its full sequence is MGHATSLSHFLILSSSRFSRLGSLTRLLSKPTSLSGSFSSISVTGQGFRCCCSVATDDTSPSVKKRVVSGVQPTGSVHLGNYLGAIKNWVALQDTYETLFIIVDHHAITLPYDTRQLGKATTDTAALYLACGIDVSKASVFVQSHVPAHVELMWLLCSSTPIGWLQKMIQFKEKSRKEGVENASVGLFTYPDLMTADILLYQSDFVPVGEDQKQHIELAREIAQRVNHLYGGKKWKKLGGRGGSLFKIPEPLIPQAGARVMSLTDGLSKMSKSAPSDQSRINLLDSKDLIVDKIKRCKTDSFAGLEFDNAERPECNNLLSIYQIVSGKKKEEVMEECKDMSWGTFKPLLADALIEHLSPIQARYQEIIAEPEYLDKILSEGADRAEELGAVTMRNMYQAMGYYQRRRY.

The N-terminal 52 residues, 1–52 (MGHATSLSHFLILSSSRFSRLGSLTRLLSKPTSLSGSFSSISVTGQGFRCCC), are a transit peptide targeting the chloroplast and mitochondrion. Ser53 bears the N-acetylserine mark. ATP contacts are provided by residues Gln72 and 78–81 (HLGN). A 'HIGH' region motif is present at residues 73–81 (PTGSVHLGN). L-tryptophan is bound at residue Asp197. Residues 209–211 (GED), Val260, 269–273 (KMSKS), and Lys272 contribute to the ATP site. The 'KMSKS' region motif lies at 269–273 (KMSKS).

It belongs to the class-I aminoacyl-tRNA synthetase family.

Its subcellular location is the plastid. It is found in the chloroplast. It localises to the mitochondrion. The catalysed reaction is tRNA(Trp) + L-tryptophan + ATP = L-tryptophyl-tRNA(Trp) + AMP + diphosphate + H(+). This Arabidopsis thaliana (Mouse-ear cress) protein is Tryptophan--tRNA ligase, chloroplastic/mitochondrial.